The chain runs to 197 residues: DNA helicase/primase complex protein (197 aa).

Belongs to the herpesviridae UL52 family.

In terms of biological role, involved in DNA replication. This Equus caballus (Horse) protein is DNA helicase/primase complex protein (7).